The chain runs to 397 residues: L-cysteine desulfidase (397 aa).

The Proton acceptor role is filled by Cys23. [4Fe-4S] cluster contacts are provided by Cys288, Cys330, and Cys337.

This sequence belongs to the L-cysteine desulfidase family. Homotrimer. [4Fe-4S] cluster is required as a cofactor.

It carries out the reaction L-cysteine + H2O = hydrogen sulfide + pyruvate + NH4(+) + H(+). Functionally, catalyzes the cleavage of L-cysteine to form 2-aminoprop-2-enoate and sulfide. The former then spontaneously hydrolyzes to pyruvate and NH(3). May be responsible for the production of sulfide required for the biosynthesis of iron-sulfur centers in this archaea. This chain is L-cysteine desulfidase, found in Methanococcus maripaludis (strain C7 / ATCC BAA-1331).